We begin with the raw amino-acid sequence, 175 residues long: Shikimate kinase (175 aa).

12 to 17 (GAGKTT) is a binding site for ATP. Residue T16 coordinates Mg(2+). Substrate-binding residues include D34, R58, and G80. R117 is an ATP binding site. Residue R136 participates in substrate binding.

The protein belongs to the shikimate kinase family. As to quaternary structure, monomer. It depends on Mg(2+) as a cofactor.

It is found in the cytoplasm. It carries out the reaction shikimate + ATP = 3-phosphoshikimate + ADP + H(+). It functions in the pathway metabolic intermediate biosynthesis; chorismate biosynthesis; chorismate from D-erythrose 4-phosphate and phosphoenolpyruvate: step 5/7. Functionally, catalyzes the specific phosphorylation of the 3-hydroxyl group of shikimic acid using ATP as a cosubstrate. In Saccharopolyspora erythraea (strain ATCC 11635 / DSM 40517 / JCM 4748 / NBRC 13426 / NCIMB 8594 / NRRL 2338), this protein is Shikimate kinase.